A 329-amino-acid polypeptide reads, in one-letter code: MINYPESLANRIIKGSTLDKDEANELLLLEGTDANALFLAASRVRDHFLGTGVDLCSIINAKSGRCPENCAFCAQSAHHATNAPVYPLVDEEQITACAREAAGAGSHCFGIVTSGSAISRGEELDRICRALRRIRRETAIEPSCSLGVIDYETALALREAGAVTYHHNLETARSFFPNVCTTHDYEEDVETVRVAKRAGLKVCCGGIFGLGETPEQRVEMALTLRELDVDSIPLNFLNPIEGTPLAGADRITPLECLKTIAVYRLILPDRKIAVCGGRERNLRDLQSWMFFAGASGTMIGNYLTTTGRPPEQDWQMLADLGLTVRQCNG.

In terms of domain architecture, Radical SAM core spans 48–278 (FLGTGVDLCS…DRKIAVCGGR (231 aa)). Positions 66, 70, and 73 each coordinate [4Fe-4S] cluster. The [2Fe-2S] cluster site is built by S143 and C203.

The protein belongs to the radical SAM superfamily. Biotin synthase family. In terms of assembly, homodimer. [4Fe-4S] cluster is required as a cofactor. It depends on [2Fe-2S] cluster as a cofactor.

The catalysed reaction is (4R,5S)-dethiobiotin + (sulfur carrier)-SH + 2 reduced [2Fe-2S]-[ferredoxin] + 2 S-adenosyl-L-methionine = (sulfur carrier)-H + biotin + 2 5'-deoxyadenosine + 2 L-methionine + 2 oxidized [2Fe-2S]-[ferredoxin]. Its pathway is cofactor biosynthesis; biotin biosynthesis; biotin from 7,8-diaminononanoate: step 2/2. Its function is as follows. Catalyzes the conversion of dethiobiotin (DTB) to biotin by the insertion of a sulfur atom into dethiobiotin via a radical-based mechanism. This is Biotin synthase from Geobacter sulfurreducens (strain ATCC 51573 / DSM 12127 / PCA).